A 70-amino-acid polypeptide reads, in one-letter code: VVYQINEVIAIYPITPSSPMAEWADAWASEGKPNIWGTVPTVVQMQSEGGVAGAVHGALQTGSLTTTFTA.

The protein belongs to the pyruvate:ferredoxin/flavodoxin oxidoreductase family.

It catalyses the reaction oxidized [flavodoxin] + pyruvate + CoA + 2 H(+) = reduced [flavodoxin] + acetyl-CoA + CO2. Its function is as follows. Oxidoreductase required for the transfer of electrons from pyruvate to flavodoxin, which reduces nitrogenase. This is Pyruvate-flavodoxin oxidoreductase (nifJ) from Anabaena variabilis.